A 342-amino-acid polypeptide reads, in one-letter code: tRNA-specific 2-thiouridylase MnmA (342 aa).

ATP contacts are provided by residues 6-13 (LLSGGVDS) and Leu-32. Cys-92 functions as the Nucleophile in the catalytic mechanism. A disulfide bridge links Cys-92 with Cys-191. ATP is bound at residue Gly-116. The tract at residues 138 to 140 (KDQ) is interaction with tRNA. Residue Cys-191 is the Cysteine persulfide intermediate of the active site. An interaction with tRNA region spans residues 293 to 294 (RY).

It belongs to the MnmA/TRMU family.

The protein localises to the cytoplasm. It carries out the reaction S-sulfanyl-L-cysteinyl-[protein] + uridine(34) in tRNA + AH2 + ATP = 2-thiouridine(34) in tRNA + L-cysteinyl-[protein] + A + AMP + diphosphate + H(+). Functionally, catalyzes the 2-thiolation of uridine at the wobble position (U34) of tRNA, leading to the formation of s(2)U34. The polypeptide is tRNA-specific 2-thiouridylase MnmA (Helicobacter pylori (strain HPAG1)).